The primary structure comprises 819 residues: Advillin (819 aa).

Residues 1–731 (MSLSSAFRTV…YEQLKNELGD (731 aa)) are core. One copy of the Gelsolin-like 1 repeat lies at 24 to 105 (MELVLVPLSA…VQYHESDTFR (82 aa)). A Phosphotyrosine modification is found at tyrosine 85. Residues 109–116 (KRGIIYKK) and 135–143 (RLLHVKGKR) each bind a 1,2-diacyl-sn-glycero-3-phospho-(1D-myo-inositol-4,5-bisphosphate). 5 Gelsolin-like repeats span residues 144–215 (NIRA…KEAA), 265–339 (TEVA…SAMF), 407–486 (LVPV…RHFM), 524–592 (NTKA…PEFW), and 631–704 (TEVT…PPTF). The tract at residues 628–819 (FLVTEVTDFT…LQLKKEAGLF (192 aa)) is required for interaction with F-actin. Residues 731 to 819 (DATAIVRITT…LQLKKEAGLF (89 aa)) are headpiece. The 67-residue stretch at 753–819 (ESGPKYYPVE…LQLKKEAGLF (67 aa)) folds into the HP domain. Tyrosine 758 is subject to Phosphotyrosine.

It belongs to the villin/gelsolin family. As to quaternary structure, associates (via C-terminus) with actin. Interacts with F-actin. Interacts with SCARF1; the interaction occurs in embryonic dorsal root ganglions at 18 dpc and induces neurite-like outgrowth. Interacts with PLCE1. Interacts with ACTR2 and ACTR3; associates with the ARP2/3 complex. In terms of tissue distribution, expressed in dorsal root ganglion (DRG) neurons and superior cervical ganglia (SCG). Expressed in podocytes.

The protein resides in the cytoplasm. Its subcellular location is the cytoskeleton. It is found in the cell projection. The protein localises to the neuron projection. It localises to the axon. The protein resides in the lamellipodium. Its subcellular location is the cell junction. It is found in the focal adhesion. Ca(2+)-regulated actin-binding protein which plays an important role in actin bundling. May have a unique function in the morphogenesis of neuronal cells which form ganglia. Required for SREC1-mediated regulation of neurite-like outgrowth. Plays a role in regenerative sensory axon outgrowth and remodeling processes after peripheral injury in neonates. Involved in the formation of long fine actin-containing filopodia-like structures in fibroblast. Plays a role in ciliogenesis. In podocytes, controls lamellipodia formation through the regulation of EGF-induced diacylglycerol generation by PLCE1 and ARP2/3 complex assembly. In Rattus norvegicus (Rat), this protein is Advillin.